Reading from the N-terminus, the 712-residue chain is Methylmalonyl-CoA mutase (712 aa).

Substrate-binding positions include 73–77 (TVRQY), 183–185 (TIQ), Arg195, Lys222, His232, and 271–273 (RLS). In terms of domain architecture, B12-binding spans 580-712 (KPKIMVAKLG…DLIEGKRRNV (133 aa)). Residue His593 participates in adenosylcob(III)alamin binding.

This sequence belongs to the methylmalonyl-CoA mutase family. In terms of assembly, homodimer. Requires adenosylcob(III)alamin as cofactor. The cofactor is a monovalent cation.

It carries out the reaction (R)-methylmalonyl-CoA = succinyl-CoA. Its pathway is metabolic intermediate metabolism; propanoyl-CoA degradation; succinyl-CoA from propanoyl-CoA: step 3/3. Radical enzyme that catalyzes the transformation of methylmalonyl-CoA to succinyl-CoA. Is required for growth on the polyhydroxyalkanoate degradation pathway intermediates 3-hydroxybutyrate and acetoacetate as sole carbon source. This Rhizobium meliloti (strain 1021) (Ensifer meliloti) protein is Methylmalonyl-CoA mutase.